A 122-amino-acid chain; its full sequence is Large ribosomal subunit protein uL14 (122 aa).

It belongs to the universal ribosomal protein uL14 family. Part of the 50S ribosomal subunit. Forms a cluster with proteins L3 and L19. In the 70S ribosome, L14 and L19 interact and together make contacts with the 16S rRNA in bridges B5 and B8.

Functionally, binds to 23S rRNA. Forms part of two intersubunit bridges in the 70S ribosome. This chain is Large ribosomal subunit protein uL14, found in Flavobacterium johnsoniae (strain ATCC 17061 / DSM 2064 / JCM 8514 / BCRC 14874 / CCUG 350202 / NBRC 14942 / NCIMB 11054 / UW101) (Cytophaga johnsonae).